A 360-amino-acid polypeptide reads, in one-letter code: Photosystem II protein D1 1 (360 aa).

3 consecutive transmembrane segments (helical) span residues 29 to 46 (YVGWFGVLMIPTLLTATT), 118 to 133 (HFLIGVFCYMGREWEL), and 142 to 156 (WICVAFSAPVAAATA). Chlorophyll a is bound at residue His118. A pheophytin a-binding site is contributed by Tyr126. 2 residues coordinate [CaMn4O5] cluster: Asp170 and Glu189. A helical transmembrane segment spans residues 197–218 (FHMLGVAGVFGGSLFSAMHGSL). His198 contacts chlorophyll a. A quinone-binding positions include His215 and 264-265 (SF). His215 is a Fe cation binding site. His272 contacts Fe cation. A helical transmembrane segment spans residues 274 to 288 (FLGAWPVVGIWFTAL). [CaMn4O5] cluster-binding residues include His332, Glu333, Asp342, and Ala344. Residues 345 to 360 (AGEQAPVALQAPAING) constitute a propeptide that is removed on maturation.

It belongs to the reaction center PufL/M/PsbA/D family. In terms of assembly, PSII is composed of 1 copy each of membrane proteins PsbA, PsbB, PsbC, PsbD, PsbE, PsbF, PsbH, PsbI, PsbJ, PsbK, PsbL, PsbM, PsbT, PsbX, PsbY, PsbZ, Psb30/Ycf12, peripheral proteins PsbO, CyanoQ (PsbQ), PsbU, PsbV and a large number of cofactors. It forms dimeric complexes. The D1/D2 heterodimer binds P680, chlorophylls that are the primary electron donor of PSII, and subsequent electron acceptors. It shares a non-heme iron and each subunit binds pheophytin, quinone, additional chlorophylls, carotenoids and lipids. D1 provides most of the ligands for the Mn4-Ca-O5 cluster of the oxygen-evolving complex (OEC). There is also a Cl(-1) ion associated with D1 and D2, which is required for oxygen evolution. The PSII complex binds additional chlorophylls, carotenoids and specific lipids. serves as cofactor. Post-translationally, tyr-161 forms a radical intermediate that is referred to as redox-active TyrZ, YZ or Y-Z. C-terminally processed by CtpA; processing is essential to allow assembly of the oxygen-evolving complex and thus photosynthetic growth.

The protein resides in the cellular thylakoid membrane. The catalysed reaction is 2 a plastoquinone + 4 hnu + 2 H2O = 2 a plastoquinol + O2. Functionally, photosystem II (PSII) is a light-driven water:plastoquinone oxidoreductase that uses light energy to abstract electrons from H(2)O, generating O(2) and a proton gradient subsequently used for ATP formation. It consists of a core antenna complex that captures photons, and an electron transfer chain that converts photonic excitation into a charge separation. The D1/D2 (PsbA/PsbD) reaction center heterodimer binds P680, the primary electron donor of PSII as well as several subsequent electron acceptors. The sequence is that of Photosystem II protein D1 1 from Picosynechococcus sp. (strain ATCC 27264 / PCC 7002 / PR-6) (Agmenellum quadruplicatum).